The chain runs to 348 residues: Putative transport protein HP_0567 (348 aa).

The next 8 membrane-spanning stretches (helical) occupy residues 6-26 (FFWI…QDFL), 27-47 (MDAL…VFLD), 56-76 (SFLC…FIVY), 143-163 (LKLI…FYYG), 194-214 (IVLL…GVMI), 224-244 (LGIL…LIWI), 266-286 (SILL…IVFI), and 300-320 (MLIF…GIIV).

Belongs to the autoinducer-2 exporter (AI-2E) (TC 2.A.86) family.

Its subcellular location is the cell membrane. The sequence is that of Putative transport protein HP_0567 from Helicobacter pylori (strain ATCC 700392 / 26695) (Campylobacter pylori).